The sequence spans 360 residues: Phosphoserine aminotransferase (360 aa).

Residue arginine 41 participates in L-glutamate binding. Tryptophan 101, threonine 152, aspartate 172, and glutamine 195 together coordinate pyridoxal 5'-phosphate. The residue at position 196 (lysine 196) is an N6-(pyridoxal phosphate)lysine. Position 237–238 (237–238 (NT)) interacts with pyridoxal 5'-phosphate.

This sequence belongs to the class-V pyridoxal-phosphate-dependent aminotransferase family. SerC subfamily. As to quaternary structure, homodimer. Pyridoxal 5'-phosphate serves as cofactor.

Its subcellular location is the cytoplasm. The enzyme catalyses O-phospho-L-serine + 2-oxoglutarate = 3-phosphooxypyruvate + L-glutamate. It catalyses the reaction 4-(phosphooxy)-L-threonine + 2-oxoglutarate = (R)-3-hydroxy-2-oxo-4-phosphooxybutanoate + L-glutamate. The protein operates within amino-acid biosynthesis; L-serine biosynthesis; L-serine from 3-phospho-D-glycerate: step 2/3. It functions in the pathway cofactor biosynthesis; pyridoxine 5'-phosphate biosynthesis; pyridoxine 5'-phosphate from D-erythrose 4-phosphate: step 3/5. In terms of biological role, catalyzes the reversible conversion of 3-phosphohydroxypyruvate to phosphoserine and of 3-hydroxy-2-oxo-4-phosphonooxybutanoate to phosphohydroxythreonine. This is Phosphoserine aminotransferase from Burkholderia cenocepacia (strain HI2424).